Reading from the N-terminus, the 214-residue chain is MKIVIIDYDMGNVRSIENAINHIGDYTIIVSGEPDTIRSADCLILPGVGAFPDAMKKLEQQKLIDLLTEEVVVRRKPVLGICLGMQLLFESSEEIQLTKGLGWIPGKVEYMRPGNDLRVPHVGWNSLILKKENSLFDYLQDDKDFYFVHSLWVNCPEKYKLATFEYGIEMTASVQYENIVGMQFHPEKSQRNGLEAIRSFLDWVKIQKLGVSHA.

Residues 2-210 (KIVIIDYDMG…LDWVKIQKLG (209 aa)) form the Glutamine amidotransferase type-1 domain. Cysteine 82 acts as the Nucleophile in catalysis. Residues histidine 185 and glutamate 187 contribute to the active site.

As to quaternary structure, heterodimer of HisH and HisF.

It is found in the cytoplasm. The catalysed reaction is 5-[(5-phospho-1-deoxy-D-ribulos-1-ylimino)methylamino]-1-(5-phospho-beta-D-ribosyl)imidazole-4-carboxamide + L-glutamine = D-erythro-1-(imidazol-4-yl)glycerol 3-phosphate + 5-amino-1-(5-phospho-beta-D-ribosyl)imidazole-4-carboxamide + L-glutamate + H(+). It catalyses the reaction L-glutamine + H2O = L-glutamate + NH4(+). The protein operates within amino-acid biosynthesis; L-histidine biosynthesis; L-histidine from 5-phospho-alpha-D-ribose 1-diphosphate: step 5/9. IGPS catalyzes the conversion of PRFAR and glutamine to IGP, AICAR and glutamate. The HisH subunit provides the glutamine amidotransferase activity that produces the ammonia necessary to HisF for the synthesis of IGP and AICAR. This is Imidazole glycerol phosphate synthase subunit HisH 2 (hisH2) from Vibrio vulnificus (strain YJ016).